Consider the following 225-residue polypeptide: Putative N-acetylmannosamine-6-phosphate 2-epimerase (225 aa).

Belongs to the NanE family.

The catalysed reaction is an N-acyl-D-glucosamine 6-phosphate = an N-acyl-D-mannosamine 6-phosphate. Its pathway is amino-sugar metabolism; N-acetylneuraminate degradation; D-fructose 6-phosphate from N-acetylneuraminate: step 3/5. Functionally, converts N-acetylmannosamine-6-phosphate (ManNAc-6-P) to N-acetylglucosamine-6-phosphate (GlcNAc-6-P). In Vibrio vulnificus (strain CMCP6), this protein is Putative N-acetylmannosamine-6-phosphate 2-epimerase.